The primary structure comprises 36 residues: Photosystem I reaction center subunit VIII (36 aa).

A helical transmembrane segment spans residues 9-29 (ILVPLVGLVFPAVTMASLFLY).

This sequence belongs to the PsaI family.

It is found in the plastid. The protein localises to the chloroplast thylakoid membrane. May help in the organization of the PsaL subunit. In Staurastrum punctulatum (Green alga), this protein is Photosystem I reaction center subunit VIII.